We begin with the raw amino-acid sequence, 49 residues long: Astexin-2 (49 aa).

A propeptide spanning residues 1 to 25 is cleaved from the precursor; it reads MTKRTTIAARRVGLIDLGKATRQTK. Residues 26-34 constitute a cross-link (isoaspartyl glycine isopeptide (Gly-Asp)); sequence GLTQIQALD.

This lasso peptide is hydrolyzed to a linear form by the isopeptidase AtxE2, in vitro. The isopeptidase AtxE2 only recognizes the threaded form (but not the unthreaded form).

The protein resides in the cytoplasm. It localises to the secreted. Shows weak antimicrobial activity against its phylogenetic relative Caulobacter crescentus. Does not show activity against other bacteria tested (E.coli, Vibrio sp, Burkhoderia thailandensis, and Salmonella newport). This is Astexin-2 from Asticcacaulis excentricus (strain ATCC 15261 / DSM 4724 / KCTC 12464 / NCIMB 9791 / VKM B-1370 / CB 48).